Reading from the N-terminus, the 557-residue chain is Urocanate hydratase (557 aa).

Residues 53–54, Gln131, 177–179, Glu197, 243–244, 264–268, 274–275, and Tyr323 each bind NAD(+); these read GG, GMG, NA, QTSAH, and YL. Cys411 is an active-site residue. Position 493 (Gly493) interacts with NAD(+).

This sequence belongs to the urocanase family. It depends on NAD(+) as a cofactor.

It is found in the cytoplasm. It catalyses the reaction 4-imidazolone-5-propanoate = trans-urocanate + H2O. The protein operates within amino-acid degradation; L-histidine degradation into L-glutamate; N-formimidoyl-L-glutamate from L-histidine: step 2/3. Its function is as follows. Catalyzes the conversion of urocanate to 4-imidazolone-5-propionate. This Mesorhizobium japonicum (strain LMG 29417 / CECT 9101 / MAFF 303099) (Mesorhizobium loti (strain MAFF 303099)) protein is Urocanate hydratase.